Reading from the N-terminus, the 504-residue chain is Kinesin light chain 3 (504 aa).

Positions 90-150 form a coiled coil; sequence ALSAHVGALE…EEEKRHLEFL (61 aa). The segment at 153–197 is disordered; the sequence is LRQYDPPAESQQSESPPRRDSLASLFPSEEEERKGPEAAGAAAAQ. Residues 158 to 167 are compositionally biased toward low complexity; the sequence is PPAESQQSES. S173 carries the phosphoserine modification. TPR repeat units follow at residues 207–240, 249–282, 291–324, 333–366, and 375–408; these read LRTL…LERS, ATML…REQT, AATL…REKV, AKQL…YEAL, and AKTK…EDLP. The tract at residues 411–438 is disordered; it reads LGAPNTGTAGDAEQALRRSSSLSKIRES. At S466 the chain carries Phosphoserine. The residue at position 498 (T498) is a Phosphothreonine. The residue at position 502 (S502) is a Phosphoserine.

It belongs to the kinesin light chain family. Oligomer composed of two heavy chains and two light chains. Associates with microtubulin in an ATP-dependent manner. Interacts with KIF5C. Interacts with ODF1. Interacts with LRGUK. Interacts with VDAC2.

It localises to the cytoplasm. Its subcellular location is the cytoskeleton. It is found in the mitochondrion. Kinesin is a microtubule-associated force-producing protein that may play a role in organelle transport. Plays a role during spermiogenesis in the development of the sperm tail midpiece and in the normal function of spermatozoa. May play a role in the formation of the mitochondrial sheath formation in the developing spermatid midpiece. The chain is Kinesin light chain 3 (KLC3) from Pongo abelii (Sumatran orangutan).